A 452-amino-acid polypeptide reads, in one-letter code: Ethanolamine kinase 1 (452 aa).

The disordered stretch occupies residues 26–64 (AVQTRIGNSAASRRSPAARPPVPAPPALPRGRPGTEGST). Over residues 43-53 (ARPPVPAPPAL) the composition is skewed to pro residues.

This sequence belongs to the choline/ethanolamine kinase family. As to expression, expressed in kidney, liver, placenta, heart, leukocyte, ovary and testis.

The protein resides in the cytoplasm. The enzyme catalyses ethanolamine + ATP = phosphoethanolamine + ADP + H(+). It functions in the pathway phospholipid metabolism; phosphatidylethanolamine biosynthesis; phosphatidylethanolamine from ethanolamine: step 1/3. Its function is as follows. Highly specific for ethanolamine phosphorylation. May be a rate-controlling step in phosphatidylethanolamine biosynthesis. The polypeptide is Ethanolamine kinase 1 (Homo sapiens (Human)).